The primary structure comprises 159 residues: Galactose-specific lectin nattectin (159 aa).

The signal sequence occupies residues 1 to 21; sequence MASVPHFTVFLFLACALGIGA. The propeptide occupies 22–24; it reads NVT. Cystine bridges form between C31–C42, C59–C155, and C132–C147. The C-type lectin domain occupies 38-156; sequence HGSRCFTFHR…CKVKRSFLCA (119 aa). Positions 122, 124, 130, and 143 each coordinate Ca(2+). A Galactose-binding motif is present at residues 122–124; that stretch reads QPD.

As to quaternary structure, monomer. Not glycosylated. In terms of tissue distribution, expressed by the venom gland.

The protein localises to the secreted. In terms of biological role, galactose specific lectin that exhibits hemagglutination activity (minimum hemagluttination concentration = 2.5 ug/well) in a calcium-independent fashion. Has remarkable pro-inflammatory activity, inducing neutrophil mobilization in mice. Plays a crucial role in the innate immune system and chronic manifestations, especially in neutrophil mobilization. This chain is Galactose-specific lectin nattectin, found in Thalassophryne nattereri (Copper Joe toadfish).